A 526-amino-acid polypeptide reads, in one-letter code: Protein spinster homolog 1 (526 aa).

Residues 1–44 (MTSRRSHGDVTPFLTQADNTEEEGVRDPESQSSDEEEEEGKDHG) form a disordered region. 12 consecutive transmembrane segments (helical) span residues 59–79 (VIIV…RFTV), 98–118 (GLVQ…FGYL), 126–146 (LIMC…SFVS), 159–179 (LVGV…ADLF), 187–207 (MLSF…IVGS), 218–238 (WALR…IFVA), 272–292 (FILS…LALW), 321–341 (MIFG…GVEI), 355–375 (LVCA…LAFA), 384–404 (VFIF…ADIL), 419–439 (LQIV…IGVI), and 463–483 (MICA…ALFI).

This sequence belongs to the major facilitator superfamily. Spinster (TC 2.A.1.49) family.

Its subcellular location is the lysosome membrane. It catalyses the reaction a 1-acyl-sn-glycero-3-phosphocholine(out) + H(+)(out) = a 1-acyl-sn-glycero-3-phosphocholine(in) + H(+)(in). It carries out the reaction a 1-acyl-sn-glycero-3-phosphoethanolamine(out) + H(+)(out) = a 1-acyl-sn-glycero-3-phosphoethanolamine(in) + H(+)(in). The enzyme catalyses a 1-O-(1Z-alkenyl)-sn-glycero-3-phosphocholine(out) + H(+)(out) = a 1-O-(1Z-alkenyl)-sn-glycero-3-phosphocholine(in) + H(+)(in). The catalysed reaction is a 1-O-(1Z-alkenyl)-sn-glycero-3-phosphoethanolamine(out) + H(+)(out) = a 1-O-(1Z-alkenyl)-sn-glycero-3-phosphoethanolamine(in) + H(+)(in). In terms of biological role, mediates the rate-limiting, proton-dependent, lysosomal efflux of lysophospholipids. Selective for zwitterionic headgroups such as lysophosphatidylcholine (LPC) and lysophosphatidylethanolamine (LPE). Essential player in lysosomal homeostasis. This chain is Protein spinster homolog 1 (spns1), found in Xenopus laevis (African clawed frog).